We begin with the raw amino-acid sequence, 351 residues long: Rhodopsin (351 aa).

Residues 1 to 36 (MNGTEGPYFYVPMVNTTGVVRSPYEYPQYYLVNPAA) lie on the Extracellular side of the membrane. N2 and N15 each carry an N-linked (GlcNAc...) asparagine glycan. Residues 37 to 61 (FAVLGAYMFFLIIFGFPINFLTLYV) traverse the membrane as a helical segment. Residues 62–73 (TLEHKKLRTPLN) are Cytoplasmic-facing. A helical transmembrane segment spans residues 74–96 (YILLNLAVADLFMVIGGFTTTMY). The Extracellular portion of the chain corresponds to 97-110 (SSMHGYFVLGRLGC). Residues C110 and C187 are joined by a disulfide bond. A helical transmembrane segment spans residues 111–133 (NLEGFSATLGGMISLWSLAVLAI). The 'Ionic lock' involved in activated form stabilization motif lies at 134 to 136 (ERW). The Cytoplasmic portion of the chain corresponds to 134 to 152 (ERWVVVCKPTSNFRFGENH). A helical transmembrane segment spans residues 153 to 173 (AIMGVSLTWTMALACTVPPLV). Residues 174–202 (GWSRYIPEGMQCSCGIDYYTRAEGFNNES) are Extracellular-facing. N200 is a glycosylation site (N-linked (GlcNAc...) asparagine). Residues 203–224 (FVLYMFFCHFMVPLIIIFFCYG) form a helical membrane-spanning segment. Residues 225–252 (RLLCAVKEAAAAQQESETTQRAEREVTR) are Cytoplasmic-facing. A helical membrane pass occupies residues 253–274 (MVILMVIGYLVCWLPYASVAWF). Residues 275-286 (IFTHQGSEFGPL) lie on the Extracellular side of the membrane. A helical transmembrane segment spans residues 287 to 308 (FMTIPAFFAKSSSIYNPVIYIC). An N6-(retinylidene)lysine modification is found at K296. The Cytoplasmic portion of the chain corresponds to 309–351 (MNKQFRNCMITTLFCGKNPFEGEEEGASSTKTEASSASSVSPA). The S-palmitoyl cysteine moiety is linked to residue C323. A disordered region spans residues 330–351 (GEEEGASSTKTEASSASSVSPA). Over residues 335–351 (ASSTKTEASSASSVSPA) the composition is skewed to low complexity.

Belongs to the G-protein coupled receptor 1 family. Opsin subfamily. Post-translationally, phosphorylated on some or all of the serine and threonine residues present in the C-terminal region. In terms of processing, contains one covalently linked retinal chromophore.

The protein resides in the membrane. It localises to the cell projection. The protein localises to the cilium. It is found in the photoreceptor outer segment. Its function is as follows. Photoreceptor required for image-forming vision at low light intensity. While most salt water fish species use retinal as chromophore, most freshwater fish use 3-dehydroretinal, or a mixture of retinal and 3-dehydroretinal. Light-induced isomerization of 11-cis to all-trans retinal triggers a conformational change that activates signaling via G-proteins. Subsequent receptor phosphorylation mediates displacement of the bound G-protein alpha subunit by arrestin and terminates signaling. The chain is Rhodopsin (rho) from Neoniphon sammara (Spotfin squirrelfish).